A 267-amino-acid chain; its full sequence is Indole-3-glycerol phosphate synthase (267 aa).

Belongs to the TrpC family.

The enzyme catalyses 1-(2-carboxyphenylamino)-1-deoxy-D-ribulose 5-phosphate + H(+) = (1S,2R)-1-C-(indol-3-yl)glycerol 3-phosphate + CO2 + H2O. It participates in amino-acid biosynthesis; L-tryptophan biosynthesis; L-tryptophan from chorismate: step 4/5. This is Indole-3-glycerol phosphate synthase from Deinococcus radiodurans (strain ATCC 13939 / DSM 20539 / JCM 16871 / CCUG 27074 / LMG 4051 / NBRC 15346 / NCIMB 9279 / VKM B-1422 / R1).